The primary structure comprises 344 residues: Fibronectin type 3 and ankyrin repeat domains 1 protein (344 aa).

The 98-residue stretch at 11–108 folds into the Fibronectin type-III domain; it reads KPHPPVVGKV…VVSVATTREP (98 aa). 6 ANK repeats span residues 109–139, 143–172, 176–205, 209–238, 243–273, and 277–306; these read ISSE…MIDV, FGFT…DVNL, SGKD…SWEA, GGCT…EVDV, SGWT…DVNI, and DGKT…DATV.

Interacts with COPS5; regulates the phosphorylation of JUN and the transcriptional activity of AP-1. Interacts with RYBP; may prevent the ubiquitin-mediated proteasomal degradation of FANK1. Post-translationally, polyubiquitinated. Polyubiquitination leads to proteasomal degradation. In terms of tissue distribution, mostly restricted to testis (at protein level), including mid to late pachytene spermatocytes (stages VI-X), diplotene spermatocytes (stage XI), meiotically dividing spermatocytes (stage XII) and spermatids in steps 1-14. Highest levels in late pachytene spermatocytes and spermatids in steps 1-9.

It localises to the nucleus. It is found in the cytoplasm. Its subcellular location is the cytosol. The protein localises to the cytoskeleton. The protein resides in the cilium basal body. It localises to the cell projection. It is found in the cilium. Through the activation of JUN and AP-1-mediated transcription, may regulate apoptosis. This Mus musculus (Mouse) protein is Fibronectin type 3 and ankyrin repeat domains 1 protein.